We begin with the raw amino-acid sequence, 250 residues long: Electron transport regulator A (250 aa).

The HTH crp-type domain occupies 164 to 237 (KNAEERLAAF…GKYIIIVDHH (74 aa)). A DNA-binding region (H-T-H motif) is located at residues 197–216 (RGDIGNYLGLTVETISRLLG).

As to quaternary structure, monomer.

Its function is as follows. Regulates anaerobic growth on fumarate, nitrite, Fe(3+), TMAO, DMSO, thiosulfate and sulfite, but not on nitrate nor Mn(4+). In Shewanella oneidensis (strain ATCC 700550 / JCM 31522 / CIP 106686 / LMG 19005 / NCIMB 14063 / MR-1), this protein is Electron transport regulator A (etrA).